Consider the following 151-residue polypeptide: MCDFTEDQTAEFKEAFQLFDRTGDGKILYSQCGDVMRALGQNPTNAEVLKVLGNPKSDEMNVKVLDFEHFLPMLQTVAKNKDQGTYEDYVEGLRVFDKEGNGTVMGAEIRHVLVTLGEKMTEEEVEMLVAGHEDSNGCINYEELLRMVLNG.

Cys-2 bears the N-acetylcysteine mark. The region spanning 7-42 (DQTAEFKEAFQLFDRTGDGKILYSQCGDVMRALGQN) is the EF-hand 1 domain. Ser-57 is subject to Phosphoserine. Lys-81 is subject to N6-acetyllysine. EF-hand domains follow at residues 84–119 (GTYEDYVEGLRVFDKEGNGTVMGAEIRHVLVTLGEK) and 119–151 (KMTEEEVEMLVAGHEDSNGCINYEELLRMVLNG).

As to quaternary structure, myosin is a hexamer of 2 heavy chains and 4 light chains. Interacts with SPATA6.

Its function is as follows. Regulatory light chain of myosin. Does not bind calcium. The protein is Myosin light polypeptide 6 (Myl6) of Rattus norvegicus (Rat).